The sequence spans 236 residues: Small ribosomal subunit protein uS2c (236 aa).

It belongs to the universal ribosomal protein uS2 family.

It localises to the plastid. It is found in the chloroplast. This Oenothera biennis (German evening primrose) protein is Small ribosomal subunit protein uS2c (rps2).